Consider the following 635-residue polypeptide: Chaperone protein HtpG (635 aa).

Positions methionine 1–arginine 346 are a; substrate-binding. A b region spans residues glutamate 347–arginine 563. Residues methionine 564–alanine 635 are c.

This sequence belongs to the heat shock protein 90 family. In terms of assembly, homodimer.

It is found in the cytoplasm. In terms of biological role, molecular chaperone. Has ATPase activity. This Bordetella parapertussis (strain 12822 / ATCC BAA-587 / NCTC 13253) protein is Chaperone protein HtpG.